The primary structure comprises 362 residues: NAD(P)H-quinone oxidoreductase subunit 1, chloroplastic (362 aa).

Transmembrane regions (helical) follow at residues 27 to 47 (IWIL…LVIV), 103 to 123 (IAVI…HFVL), 128 to 148 (IGVF…LMAG), 164 to 184 (AAQS…ISLL), 202 to 222 (FFGW…ISSL), 247 to 267 (YSGI…LVSS), 303 to 323 (VIGI…SITI), and 342 to 362 (FLLP…LVSL).

Belongs to the complex I subunit 1 family. NDH is composed of at least 16 different subunits, 5 of which are encoded in the nucleus.

The protein localises to the plastid. It localises to the chloroplast thylakoid membrane. The enzyme catalyses a plastoquinone + NADH + (n+1) H(+)(in) = a plastoquinol + NAD(+) + n H(+)(out). It carries out the reaction a plastoquinone + NADPH + (n+1) H(+)(in) = a plastoquinol + NADP(+) + n H(+)(out). NDH shuttles electrons from NAD(P)H:plastoquinone, via FMN and iron-sulfur (Fe-S) centers, to quinones in the photosynthetic chain and possibly in a chloroplast respiratory chain. The immediate electron acceptor for the enzyme in this species is believed to be plastoquinone. Couples the redox reaction to proton translocation, and thus conserves the redox energy in a proton gradient. The chain is NAD(P)H-quinone oxidoreductase subunit 1, chloroplastic from Saccharum hybrid (Sugarcane).